The chain runs to 413 residues: Gamma-glutamyl phosphate reductase (413 aa).

This sequence belongs to the gamma-glutamyl phosphate reductase family.

It localises to the cytoplasm. It carries out the reaction L-glutamate 5-semialdehyde + phosphate + NADP(+) = L-glutamyl 5-phosphate + NADPH + H(+). It functions in the pathway amino-acid biosynthesis; L-proline biosynthesis; L-glutamate 5-semialdehyde from L-glutamate: step 2/2. Catalyzes the NADPH-dependent reduction of L-glutamate 5-phosphate into L-glutamate 5-semialdehyde and phosphate. The product spontaneously undergoes cyclization to form 1-pyrroline-5-carboxylate. This is Gamma-glutamyl phosphate reductase from Lactococcus lactis subsp. lactis (strain IL1403) (Streptococcus lactis).